Reading from the N-terminus, the 72-residue chain is Disintegrin batroxostatin (72 aa).

In terms of domain architecture, Disintegrin spans 1–72 (EAGEECDCGA…SADCPRNRFY (72 aa)). 6 disulfides stabilise this stretch: Cys-6-Cys-21, Cys-8-Cys-16, Cys-15-Cys-38, Cys-29-Cys-35, Cys-34-Cys-59, and Cys-47-Cys-66. The Cell attachment site signature appears at 51–53 (RGD). Positions 52 to 72 (GDNPDDRCTGQSADCPRNRFY) are disordered.

It belongs to the venom metalloproteinase (M12B) family. P-II subfamily. P-IIa sub-subfamily. As to quaternary structure, monomer. As to expression, expressed by the venom gland.

Its subcellular location is the secreted. Functionally, inhibits fibrinogen interaction with platelets. Acts by binding to the glycoprotein IIb-IIIa receptor (ITGA2B/ITGB3) on the platelet surface and inhibits aggregation induced by ADP, thrombin, platelet-activating factor and collagen. Also inhibits T24 and SK-Mel-28 cell adhesion to fibronectin with IC(50) of 4.4 uM and 33 nM, respectively. The polypeptide is Disintegrin batroxostatin (Bothrops atrox (Barba amarilla)).